The following is a 156-amino-acid chain: E3 ubiquitin-protein ligase RNF181 (156 aa).

The RING-type; atypical zinc-finger motif lies at Cys79–Arg120. Residues Lys135 to Thr156 are disordered.

This sequence belongs to the RNF181 family.

The enzyme catalyses S-ubiquitinyl-[E2 ubiquitin-conjugating enzyme]-L-cysteine + [acceptor protein]-L-lysine = [E2 ubiquitin-conjugating enzyme]-L-cysteine + N(6)-ubiquitinyl-[acceptor protein]-L-lysine.. Its pathway is protein modification; protein ubiquitination. In terms of biological role, E3 ubiquitin-protein ligase which accepts ubiquitin from an E2 ubiquitin-conjugating enzyme in the form of a thioester and then directly transfers the ubiquitin to targeted substrates. Catalyzes monoubiquitination of 26S proteasome subunit PSMC2/RPT1. The sequence is that of E3 ubiquitin-protein ligase RNF181 (rnf181) from Danio rerio (Zebrafish).